An 89-amino-acid chain; its full sequence is Small ribosomal subunit protein uS17 (89 aa).

This sequence belongs to the universal ribosomal protein uS17 family. As to quaternary structure, part of the 30S ribosomal subunit.

In terms of biological role, one of the primary rRNA binding proteins, it binds specifically to the 5'-end of 16S ribosomal RNA. The sequence is that of Small ribosomal subunit protein uS17 from Albidiferax ferrireducens (strain ATCC BAA-621 / DSM 15236 / T118) (Rhodoferax ferrireducens).